We begin with the raw amino-acid sequence, 368 residues long: Ribosomal RNA large subunit methyltransferase M (368 aa).

Residues Ser-189, 222 to 225 (CPGG), Asp-241, Asp-261, and Asp-278 contribute to the S-adenosyl-L-methionine site. Catalysis depends on Lys-307, which acts as the Proton acceptor.

Belongs to the class I-like SAM-binding methyltransferase superfamily. RNA methyltransferase RlmE family. RlmM subfamily. Monomer.

The protein localises to the cytoplasm. It carries out the reaction cytidine(2498) in 23S rRNA + S-adenosyl-L-methionine = 2'-O-methylcytidine(2498) in 23S rRNA + S-adenosyl-L-homocysteine + H(+). Catalyzes the 2'-O-methylation at nucleotide C2498 in 23S rRNA. This chain is Ribosomal RNA large subunit methyltransferase M, found in Yersinia pestis bv. Antiqua (strain Angola).